We begin with the raw amino-acid sequence, 1410 residues long: DNA-directed RNA polymerase subunit beta' (1410 aa).

4 residues coordinate Zn(2+): C70, C72, C85, and C88. Mg(2+) contacts are provided by D460, D462, and D464. Zn(2+) contacts are provided by C814, C888, C895, and C898.

This sequence belongs to the RNA polymerase beta' chain family. The RNAP catalytic core consists of 2 alpha, 1 beta, 1 beta' and 1 omega subunit. When a sigma factor is associated with the core the holoenzyme is formed, which can initiate transcription. The cofactor is Mg(2+). It depends on Zn(2+) as a cofactor.

The enzyme catalyses RNA(n) + a ribonucleoside 5'-triphosphate = RNA(n+1) + diphosphate. DNA-dependent RNA polymerase catalyzes the transcription of DNA into RNA using the four ribonucleoside triphosphates as substrates. This chain is DNA-directed RNA polymerase subunit beta', found in Shewanella denitrificans (strain OS217 / ATCC BAA-1090 / DSM 15013).